Here is a 68-residue protein sequence, read N- to C-terminus: Peptide TsPep3 (68 aa).

A signal peptide spans 1–26; sequence MKLSCGFLLIFLVLSAMIATFSEVEA. Cystine bridges form between cysteine 30–cysteine 38, cysteine 33–cysteine 54, cysteine 37–cysteine 47, and cysteine 42–cysteine 52. The propeptide occupies 56-68; the sequence is GRSDLNEEFENYQ.

Expressed by the venom gland.

It is found in the secreted. Functionally, probable weak potassium channel blocker. The protein is Peptide TsPep3 of Tityus serrulatus (Brazilian scorpion).